The sequence spans 458 residues: UDP-N-acetylmuramoylalanine--D-glutamate ligase (458 aa).

124–130 (GSDGKTT) is an ATP binding site.

Belongs to the MurCDEF family.

Its subcellular location is the cytoplasm. It carries out the reaction UDP-N-acetyl-alpha-D-muramoyl-L-alanine + D-glutamate + ATP = UDP-N-acetyl-alpha-D-muramoyl-L-alanyl-D-glutamate + ADP + phosphate + H(+). Its pathway is cell wall biogenesis; peptidoglycan biosynthesis. In terms of biological role, cell wall formation. Catalyzes the addition of glutamate to the nucleotide precursor UDP-N-acetylmuramoyl-L-alanine (UMA). This is UDP-N-acetylmuramoylalanine--D-glutamate ligase from Clostridium novyi (strain NT).